The sequence spans 386 residues: MTSPAPVSVSIDPVELAQALIRRPSVTPADAGAMDTLQRQLEALGFACRRMKFGEIENLYARRGTARPNLCFAGHTDVVPVGDDAAWTAGPFEAEIKEGVLYGRGAVDMKSAIAAFVAAVANVPDHPGSISFLITGDEEGVAEDGTVKVVEALAAEGEIIDHCIVGEPTSANLLGDMVKIGRRGSINAWITVEGRQGHVAYPHRAANPVPVLVDILSALKARVLDDGYTGFQPSNLEITTIDVGNTATNVIPAAAKARVNIRFNPAHKGKDLAAWIEGECAKAAEGFDGAATALCKISGEAFLTEPGDFTDVIVAAVTDATGRAPELSTTGGTSDARFIRALCPVVEFGLVGSTMHQVDERVPVEEVRQLAGAYEALIRRYFAAFA.

H75 contacts Zn(2+). Residue D77 is part of the active site. D108 contributes to the Zn(2+) binding site. The active-site Proton acceptor is E138. Positions 139, 167, and 356 each coordinate Zn(2+).

The protein belongs to the peptidase M20A family. DapE subfamily. Homodimer. The cofactor is Zn(2+). It depends on Co(2+) as a cofactor.

It carries out the reaction N-succinyl-(2S,6S)-2,6-diaminopimelate + H2O = (2S,6S)-2,6-diaminopimelate + succinate. Its pathway is amino-acid biosynthesis; L-lysine biosynthesis via DAP pathway; LL-2,6-diaminopimelate from (S)-tetrahydrodipicolinate (succinylase route): step 3/3. In terms of biological role, catalyzes the hydrolysis of N-succinyl-L,L-diaminopimelic acid (SDAP), forming succinate and LL-2,6-diaminopimelate (DAP), an intermediate involved in the bacterial biosynthesis of lysine and meso-diaminopimelic acid, an essential component of bacterial cell walls. This chain is Succinyl-diaminopimelate desuccinylase, found in Caulobacter vibrioides (strain ATCC 19089 / CIP 103742 / CB 15) (Caulobacter crescentus).